The sequence spans 423 residues: Tyrosine--tRNA ligase (423 aa).

Residue Tyr35 participates in L-tyrosine binding. Positions 40-49 (PTAPSLHAGH) match the 'HIGH' region motif. Residues Tyr170 and Gln174 each coordinate L-tyrosine. The 'KMSKS' region motif lies at 230-234 (KFGKS). Lys233 serves as a coordination point for ATP. One can recognise an S4 RNA-binding domain in the interval 355–412 (DLITDLLVATGLSASKGAARRTIAEGGVSVNNMKIDSDEWTPQASDFLHGRWLVLRRG).

The protein belongs to the class-I aminoacyl-tRNA synthetase family. TyrS type 1 subfamily. As to quaternary structure, homodimer.

Its subcellular location is the cytoplasm. The catalysed reaction is tRNA(Tyr) + L-tyrosine + ATP = L-tyrosyl-tRNA(Tyr) + AMP + diphosphate + H(+). Catalyzes the attachment of tyrosine to tRNA(Tyr) in a two-step reaction: tyrosine is first activated by ATP to form Tyr-AMP and then transferred to the acceptor end of tRNA(Tyr). This is Tyrosine--tRNA ligase from Mycobacterium sp. (strain KMS).